Consider the following 529-residue polypeptide: MAVAGAMVMSGALLLLHLLAFTCVACNGGSELPPISRRSFPKGFIFGTSSSSYQFEGGAVLGGRGPSIWDTFTHQSPDKITDRSNGDVACDSYHLYKEDVRSMKEMGMDAYRFSISWSRILPSALSGGVNREGISYYNNLINELLSKGVQPFVTLFHWDSPQALEDKYKGFLSPNIINDYKEYAETCFKEFGDRVKHWITFNEPWTFCSMGYASGIMAPGRCSSWEVGKCRVGDSGREPYTACHHQLLAHAETVRLYKEKYQALQKGKIGIILNADWFVPLSQSKSSSDAARRALDFMLGWFMDPLIRGDYPLSMRELVGNRLPEFSKEQSGMVKGAFDFIGLNYYTSSYADNDPPSHGHNNSYNTDAHAKITGSRNGIPIGPQAASFWFHIYPEGICEMLLYVKENYGNPTIYITENGVDEVNNKTMPLEEALKDDTRIEYYHKHLLALLSAMRDGANVKGYFAWSLLDNFEWAEGYTVRFGINFVDYDDGMKRYPKNSARWFKKFLQKSNRDGNKRLKRVAYNAFSN.

A signal peptide spans 1-25 (MAVAGAMVMSGALLLLHLLAFTCVA). Residues glutamine 54, histidine 157, and 202 to 203 (NE) each bind a beta-D-glucoside. Catalysis depends on glutamate 203, which acts as the Proton donor. Residues cysteine 222 and cysteine 230 are joined by a disulfide bond. Tyrosine 346 lines the a beta-D-glucoside pocket. Residue asparagine 361 is glycosylated (N-linked (GlcNAc...) asparagine). Residue glutamate 417 participates in a beta-D-glucoside binding. The Nucleophile role is filled by glutamate 417. A glycan (N-linked (GlcNAc...) asparagine) is linked at asparagine 425. A beta-D-glucoside-binding positions include tryptophan 466, 473 to 474 (EW), and phenylalanine 482.

The protein belongs to the glycosyl hydrolase 1 family.

It carries out the reaction Hydrolysis of terminal, non-reducing beta-D-glucosyl residues with release of beta-D-glucose.. The protein is Beta-glucosidase 11 (BGLU11) of Oryza sativa subsp. japonica (Rice).